The sequence spans 103 residues: Large ribosomal subunit protein uL24 (103 aa).

Belongs to the universal ribosomal protein uL24 family. As to quaternary structure, part of the 50S ribosomal subunit.

Functionally, one of two assembly initiator proteins, it binds directly to the 5'-end of the 23S rRNA, where it nucleates assembly of the 50S subunit. One of the proteins that surrounds the polypeptide exit tunnel on the outside of the subunit. This chain is Large ribosomal subunit protein uL24, found in Lachnospira eligens (strain ATCC 27750 / DSM 3376 / VPI C15-48 / C15-B4) (Eubacterium eligens).